We begin with the raw amino-acid sequence, 569 residues long: Proline--tRNA ligase (569 aa).

The protein belongs to the class-II aminoacyl-tRNA synthetase family. ProS type 1 subfamily. As to quaternary structure, homodimer.

The protein localises to the cytoplasm. It catalyses the reaction tRNA(Pro) + L-proline + ATP = L-prolyl-tRNA(Pro) + AMP + diphosphate. Catalyzes the attachment of proline to tRNA(Pro) in a two-step reaction: proline is first activated by ATP to form Pro-AMP and then transferred to the acceptor end of tRNA(Pro). As ProRS can inadvertently accommodate and process non-cognate amino acids such as alanine and cysteine, to avoid such errors it has two additional distinct editing activities against alanine. One activity is designated as 'pretransfer' editing and involves the tRNA(Pro)-independent hydrolysis of activated Ala-AMP. The other activity is designated 'posttransfer' editing and involves deacylation of mischarged Ala-tRNA(Pro). The misacylated Cys-tRNA(Pro) is not edited by ProRS. The protein is Proline--tRNA ligase of Legionella pneumophila (strain Lens).